Here is a 224-residue protein sequence, read N- to C-terminus: Ribonuclease 3 (224 aa).

The region spanning 4 to 127 (YSKLEKCLDY…IMGAIYLESG (124 aa)) is the RNase III domain. A Mg(2+)-binding site is contributed by E40. Residue D44 is part of the active site. Mg(2+) contacts are provided by D113 and E116. E116 is a catalytic residue. The region spanning 154 to 223 (DYKTALQEIT…AKIAIDKLKE (70 aa)) is the DRBM domain.

This sequence belongs to the ribonuclease III family. Homodimer. The cofactor is Mg(2+).

Its subcellular location is the cytoplasm. The enzyme catalyses Endonucleolytic cleavage to 5'-phosphomonoester.. Functionally, digests double-stranded RNA. Involved in the processing of primary rRNA transcript to yield the immediate precursors to the large and small rRNAs (23S and 16S). Processes some mRNAs, and tRNAs when they are encoded in the rRNA operon. Processes pre-crRNA and tracrRNA of type II CRISPR loci if present in the organism. This Aliarcobacter butzleri (strain RM4018) (Arcobacter butzleri) protein is Ribonuclease 3.